The primary structure comprises 128 residues: Large-conductance mechanosensitive channel (128 aa).

Helical transmembrane passes span 10-30 (FAMRGNVVDMAIGVIIGSAFG) and 76-96 (GLFIQNVIDFIIIAFAIFMMI).

The protein belongs to the MscL family. As to quaternary structure, homopentamer.

It is found in the cell inner membrane. Functionally, channel that opens in response to stretch forces in the membrane lipid bilayer. May participate in the regulation of osmotic pressure changes within the cell. The sequence is that of Large-conductance mechanosensitive channel from Haemophilus influenzae (strain 86-028NP).